A 96-amino-acid polypeptide reads, in one-letter code: Large ribosomal subunit protein bL21 (96 aa).

The protein belongs to the bacterial ribosomal protein bL21 family. In terms of assembly, part of the 50S ribosomal subunit. Contacts protein L20.

In terms of biological role, this protein binds to 23S rRNA in the presence of protein L20. This Chlorobium phaeobacteroides (strain BS1) protein is Large ribosomal subunit protein bL21.